The following is a 426-amino-acid chain: Glutamate-1-semialdehyde 2,1-aminomutase (426 aa).

Lysine 265 bears the N6-(pyridoxal phosphate)lysine mark.

Belongs to the class-III pyridoxal-phosphate-dependent aminotransferase family. HemL subfamily. Homodimer. Pyridoxal 5'-phosphate serves as cofactor.

It is found in the cytoplasm. It carries out the reaction (S)-4-amino-5-oxopentanoate = 5-aminolevulinate. The protein operates within porphyrin-containing compound metabolism; protoporphyrin-IX biosynthesis; 5-aminolevulinate from L-glutamyl-tRNA(Glu): step 2/2. In Akkermansia muciniphila (strain ATCC BAA-835 / DSM 22959 / JCM 33894 / BCRC 81048 / CCUG 64013 / CIP 107961 / Muc), this protein is Glutamate-1-semialdehyde 2,1-aminomutase.